Reading from the N-terminus, the 125-residue chain is S-adenosylmethionine decarboxylase proenzyme (125 aa).

The active-site Schiff-base intermediate with substrate; via pyruvic acid is the S71. Position 71 is a pyruvic acid (Ser); by autocatalysis (S71). The Proton acceptor; for processing activity role is filled by H76. C91 serves as the catalytic Proton donor; for catalytic activity.

This sequence belongs to the prokaryotic AdoMetDC family. Type 1 subfamily. In terms of assembly, heterotetramer of two alpha and two beta chains arranged as a dimer of alpha/beta heterodimers. Requires pyruvate as cofactor. Is synthesized initially as an inactive proenzyme. Formation of the active enzyme involves a self-maturation process in which the active site pyruvoyl group is generated from an internal serine residue via an autocatalytic post-translational modification. Two non-identical subunits are generated from the proenzyme in this reaction, and the pyruvate is formed at the N-terminus of the alpha chain, which is derived from the carboxyl end of the proenzyme. The post-translation cleavage follows an unusual pathway, termed non-hydrolytic serinolysis, in which the side chain hydroxyl group of the serine supplies its oxygen atom to form the C-terminus of the beta chain, while the remainder of the serine residue undergoes an oxidative deamination to produce ammonia and the pyruvoyl group blocking the N-terminus of the alpha chain.

It catalyses the reaction S-adenosyl-L-methionine + H(+) = S-adenosyl 3-(methylsulfanyl)propylamine + CO2. It participates in amine and polyamine biosynthesis; S-adenosylmethioninamine biosynthesis; S-adenosylmethioninamine from S-adenosyl-L-methionine: step 1/1. In terms of biological role, catalyzes the decarboxylation of S-adenosylmethionine to S-adenosylmethioninamine (dcAdoMet), the propylamine donor required for the synthesis of the polyamines spermine and spermidine from the diamine putrescine. The chain is S-adenosylmethionine decarboxylase proenzyme from Pyrobaculum aerophilum (strain ATCC 51768 / DSM 7523 / JCM 9630 / CIP 104966 / NBRC 100827 / IM2).